The primary structure comprises 395 residues: ATP phosphoribosyltransferase regulatory subunit (395 aa).

It belongs to the class-II aminoacyl-tRNA synthetase family. HisZ subfamily. In terms of assembly, heteromultimer composed of HisG and HisZ subunits.

It is found in the cytoplasm. Its pathway is amino-acid biosynthesis; L-histidine biosynthesis; L-histidine from 5-phospho-alpha-D-ribose 1-diphosphate: step 1/9. Required for the first step of histidine biosynthesis. May allow the feedback regulation of ATP phosphoribosyltransferase activity by histidine. This Ectopseudomonas mendocina (strain ymp) (Pseudomonas mendocina) protein is ATP phosphoribosyltransferase regulatory subunit.